The chain runs to 123 residues: Transmembrane protein 80 (123 aa).

The next 4 helical transmembrane spans lie at 2–22 (LFHL…LMIV), 35–55 (LALD…QLYL), 68–88 (LAAS…FLLW), and 102–122 (VLLV…ADFI).

Its subcellular location is the membrane. It is found in the cell projection. The protein localises to the cilium. The sequence is that of Transmembrane protein 80 (Tmem80) from Mus musculus (Mouse).